A 591-amino-acid polypeptide reads, in one-letter code: V-type ATP synthase alpha chain (591 aa).

Position 231–238 (glycine 231–threonine 238) interacts with ATP.

This sequence belongs to the ATPase alpha/beta chains family.

The enzyme catalyses ATP + H2O + 4 H(+)(in) = ADP + phosphate + 5 H(+)(out). In terms of biological role, produces ATP from ADP in the presence of a proton gradient across the membrane. The V-type alpha chain is a catalytic subunit. The protein is V-type ATP synthase alpha chain of Clostridium novyi (strain NT).